A 163-amino-acid chain; its full sequence is uncharacterized protein (163 aa).

The N-acetyltransferase domain occupies I7–S162.

Belongs to the acetyltransferase family.

It localises to the cytoplasm. It is found in the nucleus. This is an uncharacterized protein from Schizosaccharomyces pombe (strain 972 / ATCC 24843) (Fission yeast).